A 144-amino-acid chain; its full sequence is Large ribosomal subunit protein uL11 (144 aa).

The protein belongs to the universal ribosomal protein uL11 family. In terms of assembly, part of the ribosomal stalk of the 50S ribosomal subunit. Interacts with L10 and the large rRNA to form the base of the stalk. L10 forms an elongated spine to which L12 dimers bind in a sequential fashion forming a multimeric L10(L12)X complex. Post-translationally, one or more lysine residues are methylated.

Forms part of the ribosomal stalk which helps the ribosome interact with GTP-bound translation factors. This chain is Large ribosomal subunit protein uL11, found in Marinomonas sp. (strain MWYL1).